Consider the following 492-residue polypeptide: Ribulose bisphosphate carboxylase large chain (492 aa).

Residues N131 and T181 each coordinate substrate. Residue K183 is the Proton acceptor of the active site. Residue K185 participates in substrate binding. Residues K209, D211, and E212 each contribute to the Mg(2+) site. N6-carboxylysine is present on K209. The Proton acceptor role is filled by H301. Substrate contacts are provided by R302, H334, and S386.

It belongs to the RuBisCO large chain family. Type I subfamily. Heterohexadecamer of 8 large chains and 8 small chains. Requires Mg(2+) as cofactor.

The enzyme catalyses 2 (2R)-3-phosphoglycerate + 2 H(+) = D-ribulose 1,5-bisphosphate + CO2 + H2O. It catalyses the reaction D-ribulose 1,5-bisphosphate + O2 = 2-phosphoglycolate + (2R)-3-phosphoglycerate + 2 H(+). RuBisCO catalyzes two reactions: the carboxylation of D-ribulose 1,5-bisphosphate, the primary event in carbon dioxide fixation, as well as the oxidative fragmentation of the pentose substrate. Both reactions occur simultaneously and in competition at the same active site. This chain is Ribulose bisphosphate carboxylase large chain, found in Nitrosococcus oceani (strain ATCC 19707 / BCRC 17464 / JCM 30415 / NCIMB 11848 / C-107).